The following is a 772-amino-acid chain: Carnitine O-palmitoyltransferase 1, muscle isoform (772 aa).

Residues 1 to 47 lie on the Cytoplasmic side of the membrane; sequence MAEAHQAVAFQFTVTPDGVDFRLSREALKHVYLSGINSWKKRLIRIK. The helical transmembrane segment at 48–73 threads the bilayer; that stretch reads NGILRGVYPGSPTSWLVVIMATVGSS. Residues 74–102 lie on the Mitochondrial intermembrane side of the membrane; the sequence is FCNVDISLGLVSCIQRCLPQGCGPYQTPQ. The helical transmembrane segment at 103–122 threads the bilayer; sequence TRALLSMAIFSTGVWVTGIF. Over 123–772 the chain is Cytoplasmic; sequence FFRQTLKLLL…DLFQVPKAYS (650 aa). H473 serves as the catalytic Proton acceptor. A CoA-binding site is contributed by 555 to 567; that stretch reads GKGLIKKCRTSPD. (R)-carnitine is bound by residues Y589 and T602.

This sequence belongs to the carnitine/choline acetyltransferase family. Strong expression in heart and skeletal muscle. No expression in liver and kidney.

The protein localises to the mitochondrion outer membrane. It catalyses the reaction (R)-carnitine + hexadecanoyl-CoA = O-hexadecanoyl-(R)-carnitine + CoA. The protein operates within lipid metabolism; fatty acid beta-oxidation. In terms of biological role, catalyzes the transfer of the acyl group of long-chain fatty acid-CoA conjugates onto carnitine, an essential step for the mitochondrial uptake of long-chain fatty acids and their subsequent beta-oxidation in the mitochondrion. In Homo sapiens (Human), this protein is Carnitine O-palmitoyltransferase 1, muscle isoform (CPT1B).